Here is a 67-residue protein sequence, read N- to C-terminus: ATP synthase F(0) complex subunit 8 (67 aa).

Residues 8–24 (TWFINIVSMILTLFIVF) form a helical membrane-spanning segment. N6-acetyllysine; alternate is present on K54. Position 54 is an N6-succinyllysine; alternate (K54). N6-acetyllysine is present on K57.

The protein belongs to the ATPase protein 8 family. In terms of assembly, component of the ATP synthase complex composed at least of ATP5F1A/subunit alpha, ATP5F1B/subunit beta, ATP5MC1/subunit c (homooctomer), MT-ATP6/subunit a, MT-ATP8/subunit 8, ATP5ME/subunit e, ATP5MF/subunit f, ATP5MG/subunit g, ATP5MK/subunit k, ATP5MJ/subunit j, ATP5F1C/subunit gamma, ATP5F1D/subunit delta, ATP5F1E/subunit epsilon, ATP5PF/subunit F6, ATP5PB/subunit b, ATP5PD/subunit d, ATP5PO/subunit OSCP. ATP synthase complex consists of a soluble F(1) head domain (subunits alpha(3) and beta(3)) - the catalytic core - and a membrane F(0) domain - the membrane proton channel (subunits c, a, 8, e, f, g, k and j). These two domains are linked by a central stalk (subunits gamma, delta, and epsilon) rotating inside the F1 region and a stationary peripheral stalk (subunits F6, b, d, and OSCP). Interacts with PRICKLE3.

It localises to the mitochondrion membrane. In terms of biological role, subunit 8, of the mitochondrial membrane ATP synthase complex (F(1)F(0) ATP synthase or Complex V) that produces ATP from ADP in the presence of a proton gradient across the membrane which is generated by electron transport complexes of the respiratory chain. ATP synthase complex consist of a soluble F(1) head domain - the catalytic core - and a membrane F(1) domain - the membrane proton channel. These two domains are linked by a central stalk rotating inside the F(1) region and a stationary peripheral stalk. During catalysis, ATP synthesis in the catalytic domain of F(1) is coupled via a rotary mechanism of the central stalk subunits to proton translocation. In vivo, can only synthesize ATP although its ATP hydrolase activity can be activated artificially in vitro. Part of the complex F(0) domain. This chain is ATP synthase F(0) complex subunit 8, found in Equus caballus (Horse).